Reading from the N-terminus, the 380-residue chain is Acyl-coenzyme A diphosphatase SCS3 (380 aa).

Topologically, residues 1–7 (MSSKWFN) are cytoplasmic. The chain crosses the membrane as a helical span at residues 8-28 (AIHLLVCPLTVLVGYLMNAYG). Over 29 to 43 (YGAALQATLNKDGLV) the chain is Lumenal. A helical membrane pass occupies residues 44–64 (NAMLVKKGWFWTSLVGWWCII). Residues 65 to 88 (RYRAVPGATGRDRRHIVQSFKRYA) are Cytoplasmic-facing. Residues 89–109 (ILTVWWYVFTQGIWFGVGPIM) form a helical membrane-spanning segment. The Lumenal portion of the chain corresponds to 110-233 (DLVFVYTGGH…GHWAGGHDPS (124 aa)). The helical transmembrane segment at 234-254 (GHVFLATLMCMFLLGELRVFG) threads the bilayer. H235 is a catalytic residue. At 255–325 (RRALAHLYAQ…LTRCIACDHP (71 aa)) the chain is on the cytoplasmic side. Residues 326–346 (VIILLTLLVTWLWQLLLTAVA) traverse the membrane as a helical segment. The Lumenal portion of the chain corresponds to 347-356 (SRFHTVREHM). Residue H350 is part of the active site. The chain crosses the membrane as a helical span at residues 357–377 (SGLLAAYIVTGLVYARDAAAL). Residues 378-380 (RPV) lie on the Cytoplasmic side of the membrane.

This sequence belongs to the FIT family. Fungal FIT2B/SCS3 subfamily.

The protein resides in the endoplasmic reticulum membrane. It carries out the reaction an acyl-CoA + H2O = an acyl-4'-phosphopantetheine + adenosine 3',5'-bisphosphate + 2 H(+). The catalysed reaction is (9Z)-octadecenoyl-CoA + H2O = S-(9Z-octadecenoyl)-4'-phosphopantetheine + adenosine 3',5'-bisphosphate + 2 H(+). The enzyme catalyses (5Z,8Z,11Z,14Z)-eicosatetraenoyl-CoA + H2O = S-(5Z,8Z,11Z,14Z-eicosatetraenoyl)-4'-phosphopantetheine + adenosine 3',5'-bisphosphate + 2 H(+). It catalyses the reaction hexadecanoyl-CoA + H2O = S-hexadecanoyl-4'-phosphopantetheine + adenosine 3',5'-bisphosphate + 2 H(+). Fatty acyl-coenzyme A (CoA) diphosphatase that hydrolyzes fatty acyl-CoA to yield acyl-4'-phosphopantetheine and adenosine 3',5'-bisphosphate. Preferentially hydrolyzes unsaturated long-chain acyl-CoA substrates in the endoplasmic reticulum (ER) lumen. This catalytic activity is required for maintaining ER structure and for lipid droplets (LDs) biogenesis, which are lipid storage organelles involved in maintaining lipid and energy homeostasis. May directly bind to diacylglycerol (DAGs) and triacylglycerol, which is also important for LD biogenesis. May support directional budding of nacent LDs from the ER into the cytosol by reducing DAG levels at sites of LD formation. May play a role in the regulation of cell morphology and cytoskeletal organization. Involved in phospholipid biosynthesis. This chain is Acyl-coenzyme A diphosphatase SCS3, found in Saccharomyces cerevisiae (strain ATCC 204508 / S288c) (Baker's yeast).